The following is a 200-amino-acid chain: Small ribosomal subunit protein uS4 (200 aa).

Residues 92 to 155 (SRLDAVVYSL…QNLDIIKESV (64 aa)) form the S4 RNA-binding domain.

It belongs to the universal ribosomal protein uS4 family. Part of the 30S ribosomal subunit. Contacts protein S5. The interaction surface between S4 and S5 is involved in control of translational fidelity.

In terms of biological role, one of the primary rRNA binding proteins, it binds directly to 16S rRNA where it nucleates assembly of the body of the 30S subunit. With S5 and S12 plays an important role in translational accuracy. In Staphylococcus haemolyticus (strain JCSC1435), this protein is Small ribosomal subunit protein uS4.